The sequence spans 245 residues: MSGQKPIYRRILLKLSGEALLGKEAYGIDSSVLDQIAEEVTAVHQMGVQVAIVIGGGNIFRGVSGASRGMDRSTADYMGMLATVMNALALQQALEKHGTSTRVQSAIDMKEVAEPYIRRRALRHMEKGRIVIFAAGTGLPFFTTDTTAALRAIEMGAEVLMKATKVDGIYASDPKKNPSALRYDRISFSEVLQKDLKVMDATAISLAKDQNMRIVVFNLRKKGNIKKIVLGKCIGTVVEGCDHAQ.

ATP is bound at residue 14–17; sequence KLSG. Residue Gly56 participates in UMP binding. 2 residues coordinate ATP: Gly57 and Arg61. UMP-binding positions include Asp76 and 137-144; that span reads TGLPFFTT. ATP is bound by residues Thr164, Tyr170, and Asp173.

This sequence belongs to the UMP kinase family. In terms of assembly, homohexamer.

It localises to the cytoplasm. It carries out the reaction UMP + ATP = UDP + ADP. The protein operates within pyrimidine metabolism; CTP biosynthesis via de novo pathway; UDP from UMP (UMPK route): step 1/1. Its activity is regulated as follows. Inhibited by UTP. Functionally, catalyzes the reversible phosphorylation of UMP to UDP. The protein is Uridylate kinase of Syntrophobacter fumaroxidans (strain DSM 10017 / MPOB).